The following is a 1768-amino-acid chain: Maestro heat-like repeat-containing protein family member 1 homolog (1768 aa).

HEAT repeat units lie at residues 4-47 (TSQV…HQPN), 164-203 (VHNP…AICS), 816-856 (QRLQ…AVHP), 1166-1204 (QSQM…ARGA), 1483-1521 (EQLL…CSST), and 1731-1768 (TISR…HDFH).

Belongs to the MROH1 family. Homooligomer; homooligomerizes at lysosome scission sites.

Its subcellular location is the lysosome membrane. Functionally, lysosome fission factor. Recruited to lysosomes by rab-7 at scission sites and homooligomerizes to mediate the constriction and scission of lysosomal tubules. May sever membranes by inserting amphipathic helices into one bilayer leaflet. Lysosome fission is required to maintain their steady-state number, shape, size, composition and function, and to accomplish regeneration. The protein is Maestro heat-like repeat-containing protein family member 1 homolog of Caenorhabditis elegans.